A 434-amino-acid chain; its full sequence is 5'-deoxyadenosine deaminase (434 aa).

Residues histidine 63 and histidine 65 each coordinate Zn(2+). Substrate-binding residues include glutamate 92 and histidine 184. Histidine 211 serves as a coordination point for Zn(2+). Substrate contacts are provided by glutamate 214 and aspartate 299. A Zn(2+)-binding site is contributed by aspartate 299.

Belongs to the metallo-dependent hydrolases superfamily. MTA/SAH deaminase family. As to quaternary structure, homotetramer. It depends on Zn(2+) as a cofactor.

It carries out the reaction 5'-deoxyadenosine + H2O + H(+) = 5'-deoxyinosine + NH4(+). It catalyses the reaction S-adenosyl-L-homocysteine + H2O + H(+) = S-inosyl-L-homocysteine + NH4(+). The enzyme catalyses S-methyl-5'-thioadenosine + H2O + H(+) = S-methyl-5'-thioinosine + NH4(+). The catalysed reaction is adenosine + H2O + H(+) = inosine + NH4(+). It functions in the pathway amino-acid biosynthesis; S-adenosyl-L-methionine biosynthesis. In terms of biological role, catalyzes the deamination of three SAM-derived enzymatic products, namely 5'-deoxyadenosine, S-adenosyl-L-homocysteine, and 5'-methylthioadenosine, to produce the inosine analogs. Can also deaminate adenosine. The preferred substrate for this enzyme is 5'-deoxyadenosine, but all these substrates are efficiently deaminated. Likely functions in a S-adenosyl-L-methionine (SAM) recycling pathway from S-adenosyl-L-homocysteine (SAH) produced from SAM-dependent methylation reactions. May also be involved in the recycling of 5'-deoxyadenosine, whereupon the 5'-deoxyribose moiety of 5'-deoxyinosine is further metabolized to deoxyhexoses used for the biosynthesis of aromatic amino acids in methanogens. The chain is 5'-deoxyadenosine deaminase from Methanococcoides burtonii (strain DSM 6242 / NBRC 107633 / OCM 468 / ACE-M).